The sequence spans 376 residues: Palmitoyl-[acyl-carrier-protein] 4-desaturase 2, chloroplastic (376 aa).

The N-terminal 33 residues, 1–33 (MELHLALRASPLPAADPGRRPPPPRGNFATNCT), are a transit peptide targeting the chloroplast. 6 residues coordinate Fe cation: Glu114, Glu149, His152, Glu202, Glu235, and His238.

The protein belongs to the fatty acid desaturase type 2 family. In terms of assembly, homodimer. It depends on Fe(2+) as a cofactor. Preferentially expressed in the flower labellum.

The protein resides in the plastid. It localises to the chloroplast stroma. It catalyses the reaction hexadecanoyl-[ACP] + 2 reduced [2Fe-2S]-[ferredoxin] + O2 + 2 H(+) = (4Z)-hexadecenoyl-[ACP] + 2 oxidized [2Fe-2S]-[ferredoxin] + 2 H2O. The catalysed reaction is octadecanoyl-[ACP] + 2 reduced [2Fe-2S]-[ferredoxin] + O2 + 2 H(+) = (9Z)-octadecenoyl-[ACP] + 2 oxidized [2Fe-2S]-[ferredoxin] + 2 H2O. It functions in the pathway lipid metabolism; fatty acid metabolism. Functionally, converts stearoyl-ACP to oleoyl-ACP by introduction of a cis double bond between carbons 9 and 10 of the acyl chain. Converts palmitoyl-ACP to (4Z)-hexadec-4-enoyl-ACP by introduction of a cis double bond between carbons 4 and 5 of the acyl chain. Catalyzes the desaturation of saturated fatty acid 18:0 and 16:0 to generate 18:1 (delta-9) and 16:1 (delta-4) intermediates, expected to give rise to 9-alkenes and 12-alkenes, respectively. This Ophrys sphegodes (Early spider orchid) protein is Palmitoyl-[acyl-carrier-protein] 4-desaturase 2, chloroplastic (SAD2).